The chain runs to 135 residues: L-ectoine synthase (135 aa).

Belongs to the ectoine synthase family.

It carries out the reaction (2S)-4-acetamido-2-aminobutanoate = L-ectoine + H2O. Its pathway is amine and polyamine biosynthesis; ectoine biosynthesis; L-ectoine from L-aspartate 4-semialdehyde: step 3/3. Its function is as follows. Catalyzes the circularization of gamma-N-acetyl-alpha,gamma-diaminobutyric acid (ADABA) to ectoine (1,4,5,6-tetrahydro-2-methyl-4-pyrimidine carboxylic acid), which is an excellent osmoprotectant. The sequence is that of L-ectoine synthase from Hyphomonas neptunium (strain ATCC 15444).